Consider the following 164-residue polypeptide: UPF0114 protein BCI_0033 (164 aa).

3 helical membrane-spanning segments follow: residues 15-35 (LLFP…LKFF), 53-73 (LILI…LVMV), and 136-156 (IMWC…MAYI).

This sequence belongs to the UPF0114 family.

It is found in the cell membrane. The protein is UPF0114 protein BCI_0033 of Baumannia cicadellinicola subsp. Homalodisca coagulata.